The sequence spans 93 residues: Cobalt transport protein CbiN (93 aa).

A run of 2 helical transmembrane segments spans residues 5 to 25 and 63 to 83; these read LMLL…NHGG and LLFT…LGYC.

This sequence belongs to the CbiN family. Forms an energy-coupling factor (ECF) transporter complex composed of an ATP-binding protein (A component, CbiO), a transmembrane protein (T component, CbiQ) and 2 possible substrate-capture proteins (S components, CbiM and CbiN) of unknown stoichimetry.

It localises to the cell inner membrane. It functions in the pathway cofactor biosynthesis; adenosylcobalamin biosynthesis. In terms of biological role, part of the energy-coupling factor (ECF) transporter complex CbiMNOQ involved in cobalt import. This is Cobalt transport protein CbiN from Salmonella choleraesuis (strain SC-B67).